The primary structure comprises 919 residues: UPF0182 protein Tery_4385 (919 aa).

The next 7 helical transmembrane spans lie at 6-26 (YIIIAISVILLVVFSLSRTLV), 52-72 (IFLWVGAFVIYFLFLWSNYWI), 96-116 (IFVKIIFLVNITLISLSAATA), 160-180 (WLFTLVFAGLIISIIVYALKG), 198-218 (THISLLLAGVTILIAVGFWFE), 243-263 (FAYWAMAIVALLLAVVCVLSV), and 268-288 (IIWPTYGIVIYIVLLGLFNVL).

It belongs to the UPF0182 family.

Its subcellular location is the cell membrane. This Trichodesmium erythraeum (strain IMS101) protein is UPF0182 protein Tery_4385.